Reading from the N-terminus, the 378-residue chain is Leukocyte elastase inhibitor (378 aa).

An N-acetylmethionine modification is found at methionine 1. Lysine 137 carries the post-translational modification N6-acetyllysine. Serine 299 bears the Phosphoserine mark. Positions aspartate 350–proline 378 are CARD-binding motif (CBM).

It belongs to the serpin family. Ov-serpin subfamily. As to quaternary structure, monomer. Interacts (via C-terminus) with CASP1; CASP4 (via CARD domain) and CASP5; these interactions regulate the activity of inflammatory caspases. Interacts with PRTN3. Interacts with GZMH.

It localises to the secreted. The protein resides in the cytoplasm. The protein localises to the cytolytic granule. It is found in the early endosome. Neutrophil serine protease inhibitor that plays an essential role in the regulation of the innate immune response, inflammation and cellular homeostasis. Acts primarily to protect the cell from proteases released in the cytoplasm during stress or infection. These proteases are important in killing microbes but when released from granules, these potent enzymes also destroy host proteins and contribute to mortality. Regulates the activity of the neutrophil proteases elastase, cathepsin G, proteinase-3, chymase, chymotrypsin, and kallikrein-3. Also acts as a potent intracellular inhibitor of GZMH by directly blocking its proteolytic activity. During inflammation, limits the activity of inflammatory caspases CASP1, CASP4 and CASP5 by suppressing their caspase-recruitment domain (CARD) oligomerization and enzymatic activation. When secreted, promotes the proliferation of beta-cells via its protease inhibitory function. Its function is as follows. May be cleaved leading to a loss of its anti-protease activity and to the appearance of an endonuclease activity. However no catalytic site was identified. The chain is Leukocyte elastase inhibitor (SERPINB1) from Sus scrofa (Pig).